Consider the following 461-residue polypeptide: Phosphatidate cytidylyltransferase 1 (461 aa).

Residues 1-67 form a disordered region; the sequence is MLELRHRGSC…IPEIPPSSDR (67 aa). Arg7 is subject to Omega-N-methylarginine. The segment covering 20–56 has biased composition (basic and acidic residues); the sequence is PHREGEAAGGDHETESTSDKETDIDDRYGDLDSRTDS. Phosphoserine is present on residues Ser35 and Ser37. Helical transmembrane passes span 96–116, 149–169, 183–203, 230–250, 279–299, and 357–377; these read MISL…LLVL, FLLC…FATF, HRFI…LSLV, LVIQ…SSVI, GFIG…YVLS, and IALS…ASGF.

The protein belongs to the CDS family. As to quaternary structure, homodimer. Interacts with FOS; this interaction may enhance catalytic activity. The cofactor is Mg(2+). In terms of tissue distribution, expressed in adult tissues such as placenta, brain, small intestine, ovary, testis and prostate. Highly expressed in fetal kidney, lung and brain. Lower level in fetal liver.

The protein resides in the endoplasmic reticulum membrane. The enzyme catalyses a 1,2-diacyl-sn-glycero-3-phosphate + CTP + H(+) = a CDP-1,2-diacyl-sn-glycerol + diphosphate. The catalysed reaction is 1-octadecanoyl-2-(5Z,8Z,11Z,14Z-eicosatetraenoyl)-sn-glycero-3-phosphate + CTP + H(+) = 1-octadecanoyl-2-(5Z,8Z,11Z,14Z-eicosatetraenoyl)-sn-glycero-3-cytidine-5'-diphosphate + diphosphate. It catalyses the reaction 1-octadecanoyl-2-(9Z,12Z-octadecadienoyl)-sn-glycero-3-phosphate + CTP + H(+) = 1-octadecanoyl-2-(9Z,12Z-octadecadienoyl)-sn-glycero-3-cytidine-5'-diphosphate + diphosphate. It carries out the reaction 1-hexadecanoyl-2-(5Z,8Z,11Z,14Z-eicosatetraenoyl)-sn-glycero-3-phosphate + CTP + H(+) = 1-hexadecanoyl-2-(5Z,8Z,11Z,14Z-eicosatetraenoyl)-sn-glycero-3-cytidine-5'-diphosphate + diphosphate. The enzyme catalyses 1,2-di-(5Z,8Z,11Z,14Z)-eicosatetraenoyl-sn-glycero-3-phosphate + CTP + H(+) = 1,2-di-(5Z,8Z,11Z,14Z-eicosatetraenoyl)-sn-glycero-3-cytidine-5'-diphosphate + diphosphate. The catalysed reaction is 1-octadecanoyl-2-(9Z-octadecenoyl)-sn-glycero-3-phosphate + CTP + H(+) = 1-octadecanoyl-2-(9Z-octadecenoyl)-sn-glycero-3-cytidine-5'-diphosphate + diphosphate. It catalyses the reaction 1-octadecanoyl-2-(4Z,7Z,10Z,13Z,16Z,19Z-docosahexaenoyl)-sn-glycero-3-phosphate + CTP + H(+) = 1-octadecanoyl-2-(4Z,7Z,10Z,13Z,16Z,19Z-docosahexaenoyl)-sn-glycero-3-cytidine-5'-diphosphate + diphosphate. It carries out the reaction 1,2-di-(9Z,12Z-octadecadienoyl)-sn-glycero-3-phosphate + CTP + H(+) = 1,2-di-(9Z,12Z-octadecadienoyl)-sn-glycero-3-cytidine-5'-diphosphate + diphosphate. The enzyme catalyses 1,2-di-(9Z-octadecenoyl)-sn-glycero-3-phosphate + CTP + H(+) = 1,2-di-(9Z-octadecenoyl)-sn-glycero-3-cytidine-5'-diphosphate + diphosphate. The protein operates within phospholipid metabolism; CDP-diacylglycerol biosynthesis; CDP-diacylglycerol from sn-glycerol 3-phosphate: step 3/3. With respect to regulation, inhibited by its anionic phospholipid end products, with phosphatidylinositol-(4,5)- bisphosphate showing the strongest inhibition. Its function is as follows. Catalyzes the conversion of phosphatidic acid (PA) to CDP-diacylglycerol (CDP-DAG), an essential intermediate in the synthesis of phosphatidylglycerol, cardiolipin and phosphatidylinositol. Exhibits almost no acyl chain preference for PA, showing no discrimination for the sn-1/sn-2 acyl chain composition of PAs. Plays an important role in regulating the growth of lipid droplets which are storage organelles at the center of lipid and energy homeostasis. Positively regulates the differentiation and development of adipocytes. This chain is Phosphatidate cytidylyltransferase 1, found in Homo sapiens (Human).